The chain runs to 287 residues: Festuclavine synthase I (287 aa).

This sequence belongs to the fgaFS/easG family.

The catalysed reaction is festuclavine + NAD(+) = 6,8-dimethyl-6,7-didehydroergoline + NADH + H(+). Its pathway is alkaloid biosynthesis; ergot alkaloid biosynthesis. Functionally, festuclavine synthase; part of the gene cluster that mediates the biosynthesis of isofumigaclavines, fungal ergot alkaloids. The tryptophan dimethylallyltransferase ifgA catalyzes the first step of ergot alkaloid biosynthesis by condensing dimethylallyl diphosphate (DMAP) and tryptophan to form 4-dimethylallyl-L-tryptophan. The second step is catalyzed by the methyltransferase ifgB that methylates 4-dimethylallyl-L-tryptophan in the presence of S-adenosyl-L-methionine, resulting in the formation of N-methyl-dimethylallyl-L-tryptophan. The catalase ifgD and the FAD-dependent oxidoreductase ifgC then transform N-methyl-dimethylallyl-L-tryptophan to chanoclavine-I which is further oxidized by ifgE in the presence of NAD(+), resulting in the formation of chanoclavine-I aldehyde. The chanoclavine-I aldehyde reductases ifgG and/or fgaOx3 reduce chanoclavine-I aldehyde to dihydrochanoclavine-I aldehyde that spontaneously dehydrates to form 6,8-dimethyl-6,7-didehydroergoline. The festuclavine dehydrogenases ifgF1 and/or ifgF2 then catalyze the reduction of 6,8-dimethyl-6,7-didehydroergoline to form festuclavine. Hydrolysis of festuclavine by a yet undetermined cytochrome P450 monooxygenase (called ifgH) then leads to the formation of isofumigaclavine B which is in turn acetylated by ifgI to isofumigaclavine A. Penicillium roqueforti has interestingly at least two sets of genes for the consumption of chanoclavine-I aldehyde on three different loci, the OYEs ifgG/fgaOx3 and the festuclavine synthase homologs ifgF1/ifgF2. The reason for the duplication of these genes is unclear, probably to ensure the conversion of chanoclavine-I aldehyde by differential gene expression under various environmental conditions. The protein is Festuclavine synthase I of Penicillium roqueforti (strain FM164).